The sequence spans 424 residues: Translation initiation factor 2 subunit gamma (424 aa).

Positions 23–220 (LPEVNIGLVG…AIEETIPTPE (198 aa)) constitute a tr-type G domain. Positions 32–39 (GHVDHGKT) are G1. D35, T39, G60, and S62 together coordinate Mg(2+). 35-40 (DHGKTT) contributes to the GTP binding site. The segment at 60–64 (GISIK) is G2. A G3 region spans residues 107-110 (DSPG). GTP contacts are provided by residues 163–166 (NKID) and 198–200 (SAQ). The G4 stretch occupies residues 163 to 166 (NKID). Residues 198–200 (SAQ) form a G5 region.

The protein belongs to the TRAFAC class translation factor GTPase superfamily. Classic translation factor GTPase family. EIF2G subfamily. Heterotrimer composed of an alpha, a beta and a gamma chain. Requires Mg(2+) as cofactor.

It catalyses the reaction GTP + H2O = GDP + phosphate + H(+). Functionally, eIF-2 functions in the early steps of protein synthesis by forming a ternary complex with GTP and initiator tRNA. This Archaeoglobus fulgidus (strain ATCC 49558 / DSM 4304 / JCM 9628 / NBRC 100126 / VC-16) protein is Translation initiation factor 2 subunit gamma.